The following is a 267-amino-acid chain: MNALLSNPFKEGLRKGDTQIGLWLSSTTSYMAEIAATSGYDWLLIDGEHAPNTVQDLYHQLQAIAPYASQPVIRPIEGSKALIKQVLDIGAQTLLIPMVDTAEQARQVVSATRYPPLGQRGVGASVARAARWGRIDNYMAQANESLCLLVQVESKVALENLDAILEVEGIDGVFIGPADLSASLGYPDNAGHPEVQRIIEACIYRIRAAGKAAGFLAVDPAMAQKCLAWGANFVAVGVDTMLYTEALDSRLAMFKSVQSVSTAKRSY.

His49 acts as the Proton acceptor in catalysis. Gln151 serves as a coordination point for substrate. Glu153 lines the Mg(2+) pocket. Residues Ala178 and Asp179 each coordinate substrate. Mg(2+) is bound at residue Asp179.

The protein belongs to the HpcH/HpaI aldolase family. KDR aldolase subfamily. Homohexamer. The cofactor is Mg(2+).

It catalyses the reaction 2-dehydro-3-deoxy-L-rhamnonate = (S)-lactaldehyde + pyruvate. In terms of biological role, catalyzes the reversible retro-aldol cleavage of 2-keto-3-deoxy-L-rhamnonate (KDR) to pyruvate and lactaldehyde. The sequence is that of 2-keto-3-deoxy-L-rhamnonate aldolase from Salmonella agona (strain SL483).